A 361-amino-acid polypeptide reads, in one-letter code: T-box-containing protein TBX6L (361 aa).

A DNA-binding region (T-box) is located at residues 36–209 (LWMKFHQIGT…NNPFAKGFRE (174 aa)). Disordered regions lie at residues 203-259 (FAKG…VKEE) and 280-323 (HAFP…QLPS). Composition is skewed to basic and acidic residues over residues 206 to 220 (GFRE…EGRA) and 234 to 259 (KLPE…VKEE). Over residues 280–290 (HAFPAASPAPA) the composition is skewed to low complexity.

The protein resides in the nucleus. In terms of biological role, may be involved in regulating somitogenesis. The sequence is that of T-box-containing protein TBX6L (TBX6L) from Gallus gallus (Chicken).